The following is a 266-amino-acid chain: Glutamate racemase (266 aa).

Substrate-binding positions include D9 to S10 and Y41 to G42. C72 (proton donor/acceptor) is an active-site residue. N73–T74 is a binding site for substrate. The active-site Proton donor/acceptor is the C183. Substrate is bound at residue T184–H185.

It belongs to the aspartate/glutamate racemases family.

It catalyses the reaction L-glutamate = D-glutamate. It functions in the pathway cell wall biogenesis; peptidoglycan biosynthesis. In terms of biological role, provides the (R)-glutamate required for cell wall biosynthesis. This chain is Glutamate racemase, found in Listeria innocua serovar 6a (strain ATCC BAA-680 / CLIP 11262).